The following is a 309-amino-acid chain: CDK-activating kinase assembly factor MAT1 (309 aa).

The segment at 6 to 50 (CPRCKTTKYRNPSLKLMVNVCGHTLCESCVELLFVRGSGSCQECD) adopts an RING-type zinc-finger fold. Residues 142–161 (REQEELEEALEMEKHENEQR) enclose the UIM domain.

In terms of assembly, associates with CDK7 and cyclin H.

It is found in the nucleus. Its function is as follows. Stabilizes the cyclin H-CDK7 complex to form a functional CDK-activating kinase (CAK) enzymatic complex. The chain is CDK-activating kinase assembly factor MAT1 (mnat1) from Xenopus laevis (African clawed frog).